Here is a 436-residue protein sequence, read N- to C-terminus: UPF0597 protein YhaM (436 aa).

The protein belongs to the UPF0597 family.

In Escherichia coli O45:K1 (strain S88 / ExPEC), this protein is UPF0597 protein YhaM.